We begin with the raw amino-acid sequence, 103 residues long: Large ribosomal subunit protein bL21 (103 aa).

It belongs to the bacterial ribosomal protein bL21 family. As to quaternary structure, part of the 50S ribosomal subunit. Contacts protein L20.

In terms of biological role, this protein binds to 23S rRNA in the presence of protein L20. The polypeptide is Large ribosomal subunit protein bL21 (Lactobacillus delbrueckii subsp. bulgaricus (strain ATCC 11842 / DSM 20081 / BCRC 10696 / JCM 1002 / NBRC 13953 / NCIMB 11778 / NCTC 12712 / WDCM 00102 / Lb 14)).